A 162-amino-acid chain; its full sequence is Nucleotide-binding protein CHU_2278 (162 aa).

Belongs to the YajQ family.

In terms of biological role, nucleotide-binding protein. The sequence is that of Nucleotide-binding protein CHU_2278 from Cytophaga hutchinsonii (strain ATCC 33406 / DSM 1761 / CIP 103989 / NBRC 15051 / NCIMB 9469 / D465).